A 446-amino-acid polypeptide reads, in one-letter code: Zinc finger protein BALDIBIS (446 aa).

The interval 20–53 (EHIAPNPNPNPNPTSSNSAKRKRNLPGNPDPDAE) is disordered. Ser-58 bears the Phosphoserine mark. 2 consecutive C2H2-type zinc fingers follow at residues 68–90 (FICEVCNKGFKRDQNLQLHRRGH) and 110–140 (YICPEKTCVHHDPARALGDLTGIKKHFSRKH). The short motif at 132-139 (IKKHFSRK) is the Nuclear localization signal element. The C2H2-type 2; degenerate zinc finger occupies 145–168 (WKCDKCSKKYAVMSDWKAHSKICG). Zn(2+) is bound by residues Cys-147, Cys-150, His-163, Cys-167, Cys-174, Cys-176, His-189, and Cys-193. The CCHC-type 2; atypical zinc-finger motif lies at 172–195 (YRCDCGTLFSRKDSFITHRAFCDA). The tract at residues 182 to 194 (RKDSFITHRAFCD) is SHR-binding. The segment at 425 to 446 (HNLPDSSPPASTDGTPTADMNQ) is disordered. The span at 427 to 446 (LPDSSPPASTDGTPTADMNQ) shows a compositional bias: polar residues.

As to quaternary structure, binds to RGA and SCL3 competitively in the nucleus. Expressed in roots, especially in vascular initials, cortex, endodermis, and quiescent center (QC).

The protein resides in the nucleus. Its function is as follows. Transcription factor that, together with JKD, regulates tissue boundaries and asymmetric cell division in roots by a rapid up-regulation of 'SCARECROW' (SCR), thus controlling the nuclear localization of 'SHORT-ROOT' (SHR) and restricting its action. Confines CYCD6 expression to the cortex-endodermis initial/daughter (CEI/CEID) tissues. Binds DNA via its zinc fingers. Recognizes and binds to SCL3 promoter sequence 5'-AGACAA-3' to promote its expression when in complex with RGA. This is Zinc finger protein BALDIBIS from Arabidopsis thaliana (Mouse-ear cress).